The sequence spans 347 residues: Holliday junction branch migration complex subunit RuvB (347 aa).

The large ATPase domain (RuvB-L) stretch occupies residues 4–185; that stretch reads TDRLITPAPL…FGIISRLEFY (182 aa). ATP contacts are provided by residues Leu-24, Arg-25, Gly-66, Lys-69, Thr-70, Thr-71, 132-134, Arg-175, Tyr-185, and Arg-222; that span reads EDY. Thr-70 contributes to the Mg(2+) binding site. A small ATPAse domain (RuvB-S) region spans residues 186–256; the sequence is SVEELTQIVM…VADAALLMLD (71 aa). A head domain (RuvB-H) region spans residues 259–347; it reads AIGLDVMDRK…LSADLWDEKQ (89 aa). 3 residues coordinate DNA: Arg-295, Arg-314, and Arg-319.

It belongs to the RuvB family. Homohexamer. Forms an RuvA(8)-RuvB(12)-Holliday junction (HJ) complex. HJ DNA is sandwiched between 2 RuvA tetramers; dsDNA enters through RuvA and exits via RuvB. An RuvB hexamer assembles on each DNA strand where it exits the tetramer. Each RuvB hexamer is contacted by two RuvA subunits (via domain III) on 2 adjacent RuvB subunits; this complex drives branch migration. In the full resolvosome a probable DNA-RuvA(4)-RuvB(12)-RuvC(2) complex forms which resolves the HJ.

It is found in the cytoplasm. The enzyme catalyses ATP + H2O = ADP + phosphate + H(+). In terms of biological role, the RuvA-RuvB-RuvC complex processes Holliday junction (HJ) DNA during genetic recombination and DNA repair, while the RuvA-RuvB complex plays an important role in the rescue of blocked DNA replication forks via replication fork reversal (RFR). RuvA specifically binds to HJ cruciform DNA, conferring on it an open structure. The RuvB hexamer acts as an ATP-dependent pump, pulling dsDNA into and through the RuvAB complex. RuvB forms 2 homohexamers on either side of HJ DNA bound by 1 or 2 RuvA tetramers; 4 subunits per hexamer contact DNA at a time. Coordinated motions by a converter formed by DNA-disengaged RuvB subunits stimulates ATP hydrolysis and nucleotide exchange. Immobilization of the converter enables RuvB to convert the ATP-contained energy into a lever motion, pulling 2 nucleotides of DNA out of the RuvA tetramer per ATP hydrolyzed, thus driving DNA branch migration. The RuvB motors rotate together with the DNA substrate, which together with the progressing nucleotide cycle form the mechanistic basis for DNA recombination by continuous HJ branch migration. Branch migration allows RuvC to scan DNA until it finds its consensus sequence, where it cleaves and resolves cruciform DNA. This is Holliday junction branch migration complex subunit RuvB from Nitrosospira multiformis (strain ATCC 25196 / NCIMB 11849 / C 71).